The primary structure comprises 480 residues: Glycogen synthase (480 aa).

Residue lysine 15 coordinates ADP-alpha-D-glucose.

It belongs to the glycosyltransferase 1 family. Bacterial/plant glycogen synthase subfamily.

It carries out the reaction [(1-&gt;4)-alpha-D-glucosyl](n) + ADP-alpha-D-glucose = [(1-&gt;4)-alpha-D-glucosyl](n+1) + ADP + H(+). It participates in glycan biosynthesis; glycogen biosynthesis. Synthesizes alpha-1,4-glucan chains using ADP-glucose. The chain is Glycogen synthase from Rhizobium johnstonii (strain DSM 114642 / LMG 32736 / 3841) (Rhizobium leguminosarum bv. viciae).